The following is a 264-amino-acid chain: Spermidine/putrescine transport system permease protein PotC (264 aa).

Residues 1-7 are Cytoplasmic-facing; sequence MIGRLLR. Residues 8–27 form a helical membrane-spanning segment; the sequence is GGFMTAIYAYLYIPIIILIV. The Periplasmic portion of the chain corresponds to 28 to 65; the sequence is NSFNSSRFGINWQGFTTKWYSLLMNNDSLLQAAQHSLT. An ABC transmembrane type-1 domain is found at 60–248; sequence AQHSLTMAVF…VLSLVMVIAS (189 aa). A helical membrane pass occupies residues 66 to 85; sequence MAVFSATFATLIGSLTAVAL. Topologically, residues 86–100 are cytoplasmic; sequence YRYRFRGKPFVSGML. A helical transmembrane segment spans residues 101 to 120; it reads FVVMMSPDIVMAISLLVLFM. Over 121 to 128 the chain is Periplasmic; it reads LLGIQLGF. Residues 129 to 148 form a helical membrane-spanning segment; it reads WSLLFSHITFCLPFVVVTVY. At 149–176 the chain is on the cytoplasmic side; that stretch reads SRLKGFDVRMLEAAKDLGASEFTILRKI. Residues 177-196 form a helical membrane-spanning segment; sequence ILPLAMPAVAAGWVLSFTLS. Over 197–231 the chain is Periplasmic; sequence MDDVVVSSFVTGPSYEILPLKIYSMVKVGVSPEVN. The helical transmembrane segment at 232–251 threads the bilayer; it reads ALATILLVLSLVMVIASQLI. At 252–264 the chain is on the cytoplasmic side; that stretch reads ARDKTKGNTGDVK.

Belongs to the binding-protein-dependent transport system permease family. CysTW subfamily.

The protein localises to the cell inner membrane. Required for the activity of the bacterial periplasmic transport system of putrescine and spermidine. This chain is Spermidine/putrescine transport system permease protein PotC (potC), found in Escherichia coli O157:H7.